Reading from the N-terminus, the 169-residue chain is Inorganic pyrophosphatase (169 aa).

Position 1 is an N-formylmethionine (M1). The substrate site is built by K28, R42, and Y54. Positions 64, 69, and 101 each coordinate Mg(2+). Residue Y138 participates in substrate binding.

Belongs to the PPase family. In terms of assembly, homohexamer. The cofactor is Mg(2+).

It is found in the cytoplasm. The enzyme catalyses diphosphate + H2O = 2 phosphate + H(+). Its function is as follows. Catalyzes the hydrolysis of inorganic pyrophosphate (PPi) forming two phosphate ions. This Nostoc sp. (strain PCC 7120 / SAG 25.82 / UTEX 2576) protein is Inorganic pyrophosphatase.